We begin with the raw amino-acid sequence, 143 residues long: uncharacterized protein (143 aa).

Residues 1-143 are disordered; the sequence is MRSSRQKASI…WFSQTVKRKA (143 aa). 2 stretches are compositionally biased toward basic and acidic residues: residues 34-46 and 61-76; these read ISAE…KHLD and EYQK…RKIV. 2 stretches are compositionally biased toward acidic residues: residues 77–93 and 103–115; these read DDEE…PEEE and YEEE…PDLA.

This is an uncharacterized protein from Bacillus subtilis (strain 168).